A 298-amino-acid polypeptide reads, in one-letter code: Nucleotide-binding protein Dred_3054 (298 aa).

20-27 (GMSGAGKT) serves as a coordination point for ATP. 71–74 (DIRG) provides a ligand contact to GTP.

It belongs to the RapZ-like family.

Its function is as follows. Displays ATPase and GTPase activities. The sequence is that of Nucleotide-binding protein Dred_3054 from Desulforamulus reducens (strain ATCC BAA-1160 / DSM 100696 / MI-1) (Desulfotomaculum reducens).